Here is a 266-residue protein sequence, read N- to C-terminus: Killer cell lectin-like receptor 5 (266 aa).

Residues 1-44 (MSEPEVTYSTVRLHKSSGLQRLVSHEEIQGPGEAGYRKCSVPWQ) lie on the Cytoplasmic side of the membrane. Residues 45 to 66 (LTVRSLGIFCFLLLVTVAVLAV) form a helical; Signal-anchor for type II membrane protein membrane-spanning segment. Residues 67–266 (KIFQYSQHKQ…CGKKLDHFPG (200 aa)) are Extracellular-facing. Residues N87 and N104 are each glycosylated (N-linked (GlcNAc...) asparagine). Residues 143–261 (GVKHWFCYGT…SYFCICGKKL (119 aa)) form the C-type lectin domain. Cystine bridges form between C149-C154, C167-C255, C171-C257, and C236-C249. N-linked (GlcNAc...) asparagine glycosylation is present at N250.

As to quaternary structure, homodimer; disulfide-linked. As to expression, mostly expressed in NK cells, but also observed on NK T and memory T-cells.

The protein localises to the membrane. Functionally, receptor on natural killer (NK) cells for class I MHC. This Mus musculus (Mouse) protein is Killer cell lectin-like receptor 5 (Klra5).